Consider the following 513-residue polypeptide: NADH-quinone oxidoreductase subunit N (513 aa).

A run of 14 helical transmembrane segments spans residues 20 to 40 (SVGF…LIVV), 49 to 69 (STLL…FIYQ), 88 to 108 (FAIF…VITM), 117 to 137 (ISSM…MMMM), 144 to 164 (LMIF…AGYF), 178 to 198 (LIYG…IYGV), 219 to 239 (FVML…IGAV), 260 to 280 (LSVA…YVAL), 295 to 315 (WFTL…VVAL), 323 to 343 (LLAY…IVMD), 351 to 371 (LFYL…VVLI), 394 to 414 (GAAL…IGFI), 429 to 451 (IFMW…YMLI), and 474 to 494 (LVAQ…GLFF).

The protein belongs to the complex I subunit 2 family. As to quaternary structure, NDH-1 is composed of 14 different subunits. Subunits NuoA, H, J, K, L, M, N constitute the membrane sector of the complex.

The protein localises to the cell inner membrane. It catalyses the reaction a quinone + NADH + 5 H(+)(in) = a quinol + NAD(+) + 4 H(+)(out). Its function is as follows. NDH-1 shuttles electrons from NADH, via FMN and iron-sulfur (Fe-S) centers, to quinones in the respiratory chain. The immediate electron acceptor for the enzyme in this species is believed to be a menaquinone. Couples the redox reaction to proton translocation (for every two electrons transferred, four hydrogen ions are translocated across the cytoplasmic membrane), and thus conserves the redox energy in a proton gradient. This is NADH-quinone oxidoreductase subunit N from Chlorobium chlorochromatii (strain CaD3).